A 220-amino-acid polypeptide reads, in one-letter code: MAHFIDLNSLTNTLPSLPKLPESRKTGKSSGFACRRTEEFQEPDSVQITRRMTLGFAVSIGLTGILGENNVSLAQDNGFWIDGPLPIPPIYNNIVNEKTGTRTFIKKGVYVADIGTKGRMYRVKKNAFDLLAMEDLIGPDTLNYVKKYLRLKSTFLFYDFDNLISAAASEDKQPLTDLANRLFDNFEKLEDAAKTKNLAETESCYKDTKFLLQEVMTRMA.

The N-terminal 35 residues, 1–35, are a transit peptide targeting the chloroplast; sequence MAHFIDLNSLTNTLPSLPKLPESRKTGKSSGFACR. The N-terminal 42 residues, 36–77, are a transit peptide targeting the thylakoid; it reads RTEEFQEPDSVQITRRMTLGFAVSIGLTGILGENNVSLAQDN.

Belongs to the PsbQ family. In terms of assembly, part of the chloroplast NDH complex, composed of a mixture of chloroplast and nucleus encoded subunits. Component of the NDH lumenal subcomplex, at least composed of PnsL1, PnsL2, PnsL3, PnsL4 and PnsL5.

It is found in the plastid. Its subcellular location is the chloroplast thylakoid membrane. NDH shuttles electrons from NAD(P)H:plastoquinone, via FMN and iron-sulfur (Fe-S) centers, to quinones in the photosynthetic chain and possibly in a chloroplast respiratory chain. The immediate electron acceptor for the enzyme in this species is believed to be plastoquinone. Couples the redox reaction to proton translocation, and thus conserves the redox energy in a proton gradient. Required for both formation and activity of the chloroplast NAD(P)H dehydrogenase (NDH) complex. This Arabidopsis thaliana (Mouse-ear cress) protein is Photosynthetic NDH subunit of lumenal location 3, chloroplastic.